The following is a 328-amino-acid chain: Homoarginine-6-hydroxylase 2-ODD-233 (328 aa).

Positions 183–288 (FWVCRLIGYP…VSVAFFYESN (106 aa)) constitute a Fe2OG dioxygenase domain. Fe cation-binding residues include histidine 210, aspartate 212, and histidine 268. Arginine 278 lines the 2-oxoglutarate pocket.

The protein belongs to the iron/ascorbate-dependent oxidoreductase family. Requires Fe(2+) as cofactor. L-ascorbate serves as cofactor. In terms of tissue distribution, expressed in roots and shoots.

The protein localises to the cytoplasm. The catalysed reaction is L-homoarginine + 2-oxoglutarate + O2 = 6-hydroxy-L-homoarginine + succinate + CO2. The enzyme catalyses melatonin + 2-oxoglutarate + O2 = 2-hydroxymelatonin + succinate + CO2. 2-oxoglutarate-dependent dioxygenase catalyzing homoarginine 6-hydroxylation thus producing 6-hydroxy-L-homoarginine. Guanidine (Gd) is in turn synthesized by the spontaneous conversion of 6-hydroxy-L-homoarginine to (S)-2-amino-6-oxohexanoate (RHEA:79843); guanidine is a nitrogen-rich compound that can serve as a defense or signaling substance. Involved in melatonin degradation. Catalyzes the hydroxylation of melatonin to produce 2-hydroxymelatonin. The protein is Homoarginine-6-hydroxylase 2-ODD-233 of Oryza sativa subsp. japonica (Rice).